The following is a 419-amino-acid chain: MDKFRVQGPTKLQGEVTISGAKNAALPILFAALLAEEPVEIQNVPKLKDVDTSMKLLSQLGAKVERNGSVHIDARDVNVFCAPYDLVKTMRASIWALGPLVARFGQGQVSLPGGCTIGARPVDLHISGLEQLGATIKLEEGYVKASVDGRLKGAHIVMDKVSVGATVTIMCSATLAEGTTIIENAAREPEIVDTANFLITLGAKISGQGTDRIVIEGVERLGGGVYRVLPDRIETGTFLVAAAISRGKIICRNAQPDTLDAVLAKLRDAGADIEVGEDWISLDMHGKRPKAVNVRTAPHPAFPTDMQAQFTLLNLVAEGTGFITETVFENRFMHVPELSRMGAHAEIESNTVICHGVEKLSGAQVMATDLRASASLVLAGCIAEGTTVVDRIYHIDRGYERIEDKLRALGVNIERVKGE.

22–23 (KN) serves as a coordination point for phosphoenolpyruvate. Arg-91 contributes to the UDP-N-acetyl-alpha-D-glucosamine binding site. The active-site Proton donor is Cys-115. Cys-115 is modified (2-(S-cysteinyl)pyruvic acid O-phosphothioketal). Residues 120–124 (RPVDL), 160–163 (KVSV), Asp-305, and Val-327 contribute to the UDP-N-acetyl-alpha-D-glucosamine site.

The protein belongs to the EPSP synthase family. MurA subfamily.

The protein localises to the cytoplasm. It carries out the reaction phosphoenolpyruvate + UDP-N-acetyl-alpha-D-glucosamine = UDP-N-acetyl-3-O-(1-carboxyvinyl)-alpha-D-glucosamine + phosphate. It participates in cell wall biogenesis; peptidoglycan biosynthesis. Functionally, cell wall formation. Adds enolpyruvyl to UDP-N-acetylglucosamine. This chain is UDP-N-acetylglucosamine 1-carboxyvinyltransferase, found in Shigella dysenteriae serotype 1 (strain Sd197).